A 985-amino-acid polypeptide reads, in one-letter code: MIRHAGAPARGDPTGPVPVVGKGEEEEEEDGMRLCLPANPKNCLPHRRGISILEKLIKTCPVWLQLSLGQAEVARILHRVVAGMFLVRRDSSSKQLVLCVHFPSLNESSAEVLEYTIKEEKSILYLEGSALVFEDIFRLIAFYCVSRDLLPFTLRLPQAILEASSFTDLETIANLGLGFWDSSLNPPQERGKPAEPPRDRAPGFPLVSSLRPTAHDANCACEIELSVGNDRLWFVNPIFIEDCSSALPTDQPPLGNCPARPLPPTSDATSPTSRWAPRRPPPPPPVLPLQPCSPAQPPVLPALAPAPACPLPTSPPVPAPHVTPHAPGPPDHPNQPPMMTCERLPCPTAGLGPLREEAMKPGAASSPLQQVPAPPLPAKKNLPTAPPRRRVSERVSLEDQSPGMAAEGDQLSLPPQGTSDGPEDTPRESTEQGQDTEVKASDPHSMPELPRTAKQPPVPPPRKKRISRQLASTLPAPLENAELCTQAMALETPTPGPPREGQSPASQAGTQHPPAQATAHSQSSPEFKGSLASLSDSLGVSVMATDQDSYSTSSTEEELEQFSSPSVKKKPSMILGKARHRLSFASFSSMFHAFLSNNRKLYKKVVELAQDKGSYFGSLVQDYKVYSLEMMARQTSSTEMLQEIRTMMTQLKSYLLQSTELKALVDPALHSEEELEAIVESALYKCVLKPLKEAINSCLHQIHSKDGSLQQLKENQLVILATTTTDLGVTTSVPEVPMMEKILQKFTSMHKAYSPEKKISILLKTCKLIYDSMALGNPGKPYGADDFLPVLMYVLARSNLTEMLLNVEYMMELMDPALQLGEGSYYLTTTYGALEHIKSYDKITVTRQLSVEVQDSIHRWERRRTLNKARASRSSVQDFICVSYLEPEQQARTLASRADTQAQALCAQCAEKFAVERPQAHRLFVLVDGRCFQLADDALPHCIKGYLLRSEPKRDFHFVYRPLDGGGGGGGGSPPCLVVREPNFL.

The tract at residues 1-24 is disordered; the sequence is MIRHAGAPARGDPTGPVPVVGKGE. Residues 63–158 enclose the SH2 domain; it reads WLQLSLGQAE…LLPFTLRLPQ (96 aa). Disordered stretches follow at residues 183-202, 251-293, and 315-531; these read SLNP…DRAP, QPPL…QPCS, and PPVP…KGSL. The span at 189–201 shows a compositional bias: basic and acidic residues; it reads ERGKPAEPPRDRA. Pro residues-rich tracts occupy residues 278 to 288 and 315 to 336; these read RRPPPPPPVLP and PPVP…PNQP. Residues 424-442 show a composition bias toward basic and acidic residues; the sequence is DTPRESTEQGQDTEVKASD. Residues 587 to 732 form an interaction with RAB5B region; the sequence is FSSMFHAFLS…TTTDLGVTTS (146 aa). One can recognise a VPS9 domain in the interval 703 to 846; that stretch reads HSKDGSLQQL…IKSYDKITVT (144 aa). A Ras-associating domain is found at 877 to 963; it reads QDFICVSYLE…RDFHFVYRPL (87 aa).

The protein belongs to the RIN (Ras interaction/interference) family. In terms of assembly, interacts with CD2AP, RAB5B, RAB31 and BIN1. Widely expressed.

The protein resides in the cytoplasm. Its subcellular location is the cytoplasmic vesicle. The protein localises to the early endosome. Ras effector protein that functions as a guanine nucleotide exchange (GEF) for RAB5B and RAB31, by exchanging bound GDP for free GTP. Required for normal RAB31 function. This is Ras and Rab interactor 3 (RIN3) from Homo sapiens (Human).